We begin with the raw amino-acid sequence, 337 residues long: Methenyltetrahydromethanopterin cyclohydrolase (337 aa).

Belongs to the MCH family.

The protein localises to the cytoplasm. The catalysed reaction is 5,10-methenyl-5,6,7,8-tetrahydromethanopterin + H2O = N(5)-formyl-5,6,7,8-tetrahydromethanopterin + H(+). It participates in one-carbon metabolism; formaldehyde degradation; formate from formaldehyde (H(4)MPT route): step 3/5. Catalyzes the hydrolysis of methenyl-H(4)MPT(+) to 5-formyl-H(4)MPT. This Xanthobacter autotrophicus protein is Methenyltetrahydromethanopterin cyclohydrolase (mch).